The chain runs to 78 residues: Protein M6 (78 aa).

The protein belongs to the A9/FIL1 family. In terms of tissue distribution, tapetum of anthers.

It localises to the secreted. The protein is Protein M6 (M6) of Lilium henryi (Henry's lily).